A 313-amino-acid polypeptide reads, in one-letter code: Dihydroorotate dehydrogenase B (NAD(+)), catalytic subunit (313 aa).

Residues Ser21 and 45-46 contribute to the FMN site; that span reads KA. Substrate-binding positions include Lys45 and 69–73; that span reads NAIGL. 2 residues coordinate FMN: Asn99 and Asn127. Position 127 (Asn127) interacts with substrate. Residue Cys130 is the Nucleophile of the active site. FMN is bound by residues Lys165 and Ile191. Position 192–193 (192–193) interacts with substrate; the sequence is NT. FMN contacts are provided by residues Gly217, 243–244, and 265–266; these read GG and GT.

Belongs to the dihydroorotate dehydrogenase family. Type 1 subfamily. Heterotetramer of 2 PyrK and 2 PyrD type B subunits. Requires FMN as cofactor.

Its subcellular location is the cytoplasm. The catalysed reaction is (S)-dihydroorotate + NAD(+) = orotate + NADH + H(+). It functions in the pathway pyrimidine metabolism; UMP biosynthesis via de novo pathway; orotate from (S)-dihydroorotate (NAD(+) route): step 1/1. Catalyzes the conversion of dihydroorotate to orotate with NAD(+) as electron acceptor. The chain is Dihydroorotate dehydrogenase B (NAD(+)), catalytic subunit (pyrD) from Geobacillus kaustophilus (strain HTA426).